The following is a 938-amino-acid chain: Kinesin-like protein KIN-7B (938 aa).

The Kinesin motor domain occupies 29–348 (KILVTVRMRP…LSFAMSAKEV (320 aa)). 113–120 (GQTSSGKT) contacts ATP. Positions 357-431 (VVSEKKLLKH…DLERKAKERK (75 aa)) form a coiled coil. Residues 450–481 (TKEESIPSKSVPSSRRTARDRRKDNVRQSLTS) are disordered. Residues 555–590 (KANLKEEINRLNSQEIAALEKKLECVQNTIDMLVSS) adopt a coiled-coil conformation. Residues 628 to 678 (CSPLSGTENKDPESNVVSANSAPVSFGATPPKRDDNRCRTQSREGTPVSRQ) are disordered. Over residues 641 to 652 (SNVVSANSAPVS) the composition is skewed to low complexity. Over residues 658 to 669 (PKRDDNRCRTQS) the composition is skewed to basic and acidic residues.

Belongs to the TRAFAC class myosin-kinesin ATPase superfamily. Kinesin family. KIN-7 subfamily. In terms of assembly, interacts with ANP3. Interacts with TIO/FU. As to expression, expressed in roots, stems, flowers, pollen mother cells and embryos.

It is found in the cytoplasm. Its subcellular location is the cytoskeleton. It localises to the phragmoplast. Its function is as follows. Probable plus end-directed motor protein that functions in the NACK-PQR (ANP3-MKK6-MPK4) MAP kinase signaling pathway, which is essential for somatic cell cytokinesis, especially for the cell-plate formation and its expansion. May regulate the activity and the localization of ANP3, probably by association through the non-catalytic region of the kinase. Functionally redundant with NACK1 and essential to promote the progression of cytokinesis and for cellularization (formation of the cell plate) during microgametogenesis and megagametogenesis. The sequence is that of Kinesin-like protein KIN-7B from Arabidopsis thaliana (Mouse-ear cress).